The primary structure comprises 146 residues: NADH-quinone oxidoreductase subunit A (146 aa).

A run of 3 helical transmembrane segments spans residues 14–34 (FALF…GGFL), 68–88 (LVAM…AWAV), and 96–116 (IGFI…IYLV).

This sequence belongs to the complex I subunit 3 family. In terms of assembly, NDH-1 is composed of 13 different subunits. Subunits NuoA, H, J, K, L, M, N constitute the membrane sector of the complex.

Its subcellular location is the cell inner membrane. The catalysed reaction is a quinone + NADH + 5 H(+)(in) = a quinol + NAD(+) + 4 H(+)(out). Its function is as follows. NDH-1 shuttles electrons from NADH, via FMN and iron-sulfur (Fe-S) centers, to quinones in the respiratory chain. The immediate electron acceptor for the enzyme in this species is believed to be ubiquinone. Couples the redox reaction to proton translocation (for every two electrons transferred, four hydrogen ions are translocated across the cytoplasmic membrane), and thus conserves the redox energy in a proton gradient. This chain is NADH-quinone oxidoreductase subunit A, found in Pectobacterium atrosepticum (strain SCRI 1043 / ATCC BAA-672) (Erwinia carotovora subsp. atroseptica).